A 471-amino-acid chain; its full sequence is RuvB-like protein 2 (471 aa).

75 to 82 (GPPSTGKT) serves as a coordination point for ATP.

Belongs to the RuvB family. Probably forms a homohexamer. Interacts with RVB1 and may form heterododecamers with RVB1. Component of the SWR1 chromatin remodeling complex composed of at least ACT1, ARP4, RVB1, RVB2, ARP6, YAF9, VPS71, VPS72, SWC3, SWC4, SWC5, SWC7 and SWR1, and perhaps BDF1. Component of the chromatin-remodeling INO80 complex, at least composed of ARP4, ARP5, ARP8, RVB1, RVB2, TAF14, NHP10, IES1, IES3, IES4, IES6, ACT1, IES2, IES5 and INO80. Also belongs to the R2TP complex composed of at least RVB1, RVB2, TAH1 and PIH1. Interacts with SPT15/TBP.

Its subcellular location is the nucleus. It localises to the nucleoplasm. The enzyme catalyses ATP + H2O = ADP + phosphate + H(+). DNA helicase which participates in several chromatin remodeling complexes, including the SWR1 and the INO80 complexes. The SWR1 complex mediates the ATP-dependent exchange of histone H2A for the H2A variant HZT1 leading to transcriptional regulation of selected genes by chromatin remodeling. The INO80 complex remodels chromatin by shifting nucleosomes. Its ability to induce transcription of some phosphate-responsive genes is modulated by inositol polyphosphates. The INO80 complex is involved in DNA repair by associating to 'Ser-129' phosphorylated H2A histones as a response to DNA damage. During transcription may recruit SPT15/TBP to the TATA-boxes of involved genes. Required for box C/D and box H/ACA snoRNA accumulation and involved in pre-rRNA processing. The chain is RuvB-like protein 2 (RVB2) from Saccharomyces cerevisiae (strain ATCC 204508 / S288c) (Baker's yeast).